The primary structure comprises 223 residues: Deoxyribose-phosphate aldolase (223 aa).

The active-site Proton donor/acceptor is the aspartate 91. The active-site Schiff-base intermediate with acetaldehyde is lysine 154. Lysine 183 serves as the catalytic Proton donor/acceptor.

This sequence belongs to the DeoC/FbaB aldolase family. DeoC type 1 subfamily.

It localises to the cytoplasm. The enzyme catalyses 2-deoxy-D-ribose 5-phosphate = D-glyceraldehyde 3-phosphate + acetaldehyde. Its pathway is carbohydrate degradation; 2-deoxy-D-ribose 1-phosphate degradation; D-glyceraldehyde 3-phosphate and acetaldehyde from 2-deoxy-alpha-D-ribose 1-phosphate: step 2/2. In terms of biological role, catalyzes a reversible aldol reaction between acetaldehyde and D-glyceraldehyde 3-phosphate to generate 2-deoxy-D-ribose 5-phosphate. This is Deoxyribose-phosphate aldolase from Geobacillus sp. (strain WCH70).